Reading from the N-terminus, the 385-residue chain is Acetate kinase (385 aa).

Residue Asn-8 coordinates Mg(2+). Lys-15 is an ATP binding site. Arg-85 contacts substrate. Asp-142 functions as the Proton donor/acceptor in the catalytic mechanism. Residues 200 to 204 (HLGNG), 275 to 277 (DMR), and 323 to 327 (GIGEN) contribute to the ATP site. Glu-373 serves as a coordination point for Mg(2+).

The protein belongs to the acetokinase family. In terms of assembly, homodimer. Mg(2+) is required as a cofactor. Requires Mn(2+) as cofactor.

It is found in the cytoplasm. It carries out the reaction acetate + ATP = acetyl phosphate + ADP. The protein operates within metabolic intermediate biosynthesis; acetyl-CoA biosynthesis; acetyl-CoA from acetate: step 1/2. Catalyzes the formation of acetyl phosphate from acetate and ATP. Can also catalyze the reverse reaction. The polypeptide is Acetate kinase (Francisella tularensis subsp. holarctica (strain OSU18)).